The sequence spans 393 residues: 8-amino-7-oxononanoate synthase (393 aa).

Pyridoxal 5'-phosphate is bound at residue 107 to 108; that stretch reads GF. Residue H132 participates in substrate binding. Residues S180, 205–208, and 236–239 each bind pyridoxal 5'-phosphate; these read DDAH and TLSK. K239 is subject to N6-(pyridoxal phosphate)lysine. T353 is a binding site for substrate.

The protein belongs to the class-II pyridoxal-phosphate-dependent aminotransferase family. BioF subfamily. As to quaternary structure, homodimer. Pyridoxal 5'-phosphate is required as a cofactor.

The catalysed reaction is 6-carboxyhexanoyl-[ACP] + L-alanine + H(+) = (8S)-8-amino-7-oxononanoate + holo-[ACP] + CO2. It participates in cofactor biosynthesis; biotin biosynthesis. Functionally, catalyzes the decarboxylative condensation of pimeloyl-[acyl-carrier protein] and L-alanine to produce 8-amino-7-oxononanoate (AON), [acyl-carrier protein], and carbon dioxide. This chain is 8-amino-7-oxononanoate synthase, found in Coprothermobacter proteolyticus (strain ATCC 35245 / DSM 5265 / OCM 4 / BT).